A 673-amino-acid chain; its full sequence is Polyunsaturated fatty acid 5-lipoxygenase (673 aa).

The region spanning 2–117 is the PLAT domain; it reads PSYTVTVATG…EIVLRDGRAK (116 aa). Glycine 17, threonine 18, aspartate 19, asparagine 44, aspartate 45, glutamate 47, aspartate 79, and aspartate 80 together coordinate Ca(2+). The region spanning 118 to 673 is the Lipoxygenase domain; the sequence is LARDDQIHIL…PDRIPNSVAI (556 aa). Phosphoserine is present on serine 271. Fe cation is bound by residues histidine 367 and histidine 372. Phosphoserine is present on serine 523. 3 residues coordinate Fe cation: histidine 550, asparagine 554, and isoleucine 673.

This sequence belongs to the lipoxygenase family. Homodimer. Interacts with ALOX5AP and LTC4S. Interacts with COTL1, the interaction is required for stability and efficient catalytic activity. Interacts with PIK3R1; this interaction bridges ALOX5 with CD40 after CD40 ligation in B cells and leads to the production of reactive oxygen species (ROS). Interacts (via PLAT domain) with DICER1 (via Dicer dsRNA-binding fold domain); this interaction enhances arachidonate 5-lipoxygenase activity and modifies the miRNA precursor processing activity of DICER1. It depends on Fe cation as a cofactor. Post-translationally, serine phosphorylation by MAPKAPK2 is stimulated by arachidonic acid. Phosphorylation on Ser-523 by PKA has an inhibitory effect. Phosphorylation on Ser-271 prevents export from the nucleus. Phosphorylation at Ser-523 is stimulated by 8-bromo-3',5'-cyclic AMP or prostaglandin E2.

The protein localises to the cytoplasm. The protein resides in the nucleus matrix. Its subcellular location is the nucleus membrane. It is found in the perinuclear region. It localises to the cytosol. The protein localises to the nucleus envelope. The protein resides in the nucleus intermembrane space. The enzyme catalyses (5Z,8Z,11Z,14Z)-eicosatetraenoate + O2 = leukotriene A4 + H2O. It catalyses the reaction 18-HEPE + O2 = (5S)-hydroperoxy-18-hydroxy-(7E,9E,11Z,14Z,16E)-eicosapentaenoate. It carries out the reaction (18R)-hydroxy-(5Z,8Z,11Z,14Z,16E)-eicosapentaenoate + O2 = (5S)-hydroperoxy-(18R)-hydroxy-(6E,8Z,11Z,14Z,16E)-eicosapentaenoate. The catalysed reaction is (18S)-hydroxy-(5Z,8Z,11Z,14Z,16E)-eicosapentaenoate + O2 = (5S)-hydroperoxy-(18S)-hydroxy-(6E,8Z,11Z,14Z,16E)-eicosapentaenoate. The enzyme catalyses (5S)-hydroperoxy-(18S)-hydroxy-(6E,8Z,11Z,14Z,16E)-eicosapentaenoate = (5S,6S)-epoxy-(18S)-hydroxy-(7E,9E,11Z,14Z,16E)-eicosapentaenoate + H2O. It catalyses the reaction (5S)-hydroperoxy-(18R)-hydroxy-(6E,8Z,11Z,14Z,16E)-eicosapentaenoate = (5S,6S)-epoxy-(18R)-hydroxy-(7E,9E,11Z,14Z,16E)-eicosapentaenoate + H2O. It carries out the reaction (5S)-hydroperoxy-18-hydroxy-(7E,9E,11Z,14Z,16E)-eicosapentaenoate = (5S,6S)-epoxy-18-hydroxy-(7E,9E,11Z,14Z,16E)-eicosapentaenoate + H2O. The catalysed reaction is (5Z,8Z,11Z,14Z)-eicosatetraenoate + O2 = (5S)-hydroperoxy-(6E,8Z,11Z,14Z)-eicosatetraenoate. The enzyme catalyses (15S)-hydroxy-(5Z,8Z,11Z,13E)-eicosatetraenoate + O2 = (5S)-hydroperoxy-(15S)-hydroxy-(6E,8Z,11Z,13E)-eicosatetraenoate. It catalyses the reaction (5S)-hydroperoxy-(6E,8Z,11Z,14Z)-eicosatetraenoate = leukotriene A4 + H2O. It carries out the reaction (5Z,8Z,11Z,14Z)-eicosatetraenoate + O2 = (8S)-hydroperoxy-(5Z,9E,11Z,14Z)-eicosatetraenoate. The catalysed reaction is (5Z,8Z,11Z,14Z)-eicosatetraenoate + O2 = (12S)-hydroperoxy-(5Z,8Z,10E,14Z)-eicosatetraenoate. The enzyme catalyses (5Z,8Z)-eicosadienoate + O2 = (5S)-hydroperoxy-(6E,8Z)-eicosadienoate. It catalyses the reaction (12S)-hydroxy-(5Z,8Z,10E,14Z)-eicosatetraenoate + O2 = (5S)-hydroperoxy-(12S)-hydroxy-(6E,8Z,10E,14Z)-eicosatetraenoate. It carries out the reaction (5Z,8Z,11Z,14Z,17Z)-eicosapentaenoate + O2 = 5-hydroperoxy-(6E,8Z,11Z,14Z,17Z)-eicosapentaenoate. The catalysed reaction is (4Z,7Z,10Z,13Z,16Z,19Z)-docosahexaenoate + O2 = (14S)-hydroperoxy-(4Z,7Z,10Z,12E,16Z,19Z)-docosahexaenoate. The enzyme catalyses (4Z,7Z,10Z,13Z,16Z,19Z)-docosahexaenoate + O2 = (7S)-hydroperoxy-(4Z,8E,10Z,13Z,16Z,19Z)-docosahexaenoate. It catalyses the reaction (4Z,7Z,10Z,13Z,16Z,19Z)-docosahexaenoate + O2 = (17S)-hydroperoxy-(4Z,7Z,10Z,13Z,15E,19Z)-docosahexaenoate. It functions in the pathway lipid metabolism; leukotriene A4 biosynthesis. Functionally, catalyzes the oxygenation of arachidonate to 5-hydroperoxyeicosatetraenoate (5-HPETE) followed by the dehydration to 5,6- epoxyeicosatetraenoate (Leukotriene A4/LTA4), the first two steps in the biosynthesis of leukotrienes, which are potent mediators of inflammation. Also catalyzes the oxygenation of arachidonate into 8-hydroperoxyicosatetraenoate (8-HPETE) and 12-hydroperoxyicosatetraenoate (12-HPETE). Displays lipoxin synthase activity being able to convert (15S)-HETE into a conjugate tetraene. Although arachidonate is the preferred substrate, this enzyme can also metabolize oxidized fatty acids derived from arachidonate such as (15S)-HETE, eicosapentaenoate (EPA) such as (18R)- and (18S)-HEPE or docosahexaenoate (DHA) which lead to the formation of specialized pro-resolving mediators (SPM) lipoxin and resolvins E and D respectively, therefore it participates in anti-inflammatory responses. Oxidation of DHA directly inhibits endothelial cell proliferation and sprouting angiogenesis via peroxisome proliferator-activated receptor gamma (PPARgamma). It does not catalyze the oxygenation of linoleic acid and does not convert (5S)-HETE to lipoxin isomers. In addition to inflammatory processes, it participates in dendritic cell migration, wound healing through an antioxidant mechanism based on heme oxygenase-1 (HO-1) regulation expression, monocyte adhesion to the endothelium via ITGAM expression on monocytes. Moreover, it helps establish an adaptive humoral immunity by regulating primary resting B cells and follicular helper T cells and participates in the CD40-induced production of reactive oxygen species (ROS) after CD40 ligation in B cells through interaction with PIK3R1 that bridges ALOX5 with CD40. May also play a role in glucose homeostasis, regulation of insulin secretion and palmitic acid-induced insulin resistance via AMPK. Can regulate bone mineralization and fat cell differentiation increases in induced pluripotent stem cells. This Mesocricetus auratus (Golden hamster) protein is Polyunsaturated fatty acid 5-lipoxygenase.